A 606-amino-acid polypeptide reads, in one-letter code: Radial spoke head protein 3 homolog (606 aa).

The segment at 1 to 103 is disordered; sequence MARSEARRQA…NSPEAPPLDG (103 aa). The span at 15–46 shows a compositional bias: basic and acidic residues; that stretch reads PRAVPEERALRERRQPRPRREPLESGAGDHRR. Position 331 is a phosphothreonine; by MAPK1 (T331). A coiled-coil region spans residues 393 to 429; sequence AYEELRNIELAEVQRLEEQERRHREEKERRKQQQWQV. The segment at 520–606 is disordered; that stretch reads EGRHASVRPE…KSSKREELSQ (87 aa). Residues 547–556 show a composition bias toward polar residues; that stretch reads SQDQGASQAQ. The stretch at 572–604 forms a coiled coil; it reads ARYAERVSSQERRLAEENDELTEMRKSSKREEL. Residues 573–606 are compositionally biased toward basic and acidic residues; that stretch reads RYAERVSSQERRLAEENDELTEMRKSSKREELSQ.

This sequence belongs to the flagellar radial spoke RSP3 family. Component of the axonemal radial spoke 1 (RS1) and 2 (RS2) complexes, at least composed of spoke head proteins RSPH1, RSPH3, RSPH9 and the cilia-specific component RSPH4A or sperm-specific component RSPH6A, spoke stalk proteins RSPH14, DNAJB13, DYDC1, ROPN1L and NME5, and the RS1 complex-specific anchor protein IQUB. Interacts with IQUB. Interacts with phosphorylated MAPK1. Interacts with MEK1. Interacts with PKA regulatory subunits PRKAR1A and PRKAR1B. Interacts with RSPH1. Interacts with RSPH4A. Interacts with RSPH6A. Interacts with RSPH9. Interacts with LRRC23.

The protein resides in the cytoplasm. Its subcellular location is the cytoskeleton. The protein localises to the cilium axoneme. It is found in the flagellum axoneme. In terms of biological role, functions as part of axonemal radial spoke complexes that play an important part in the motility of sperm and cilia. Functions as a protein kinase A-anchoring protein that scaffolds the cAMP-dependent protein kinase holoenzyme. May serve as a point of convergence for MAPK and PKA signaling in cilia. The sequence is that of Radial spoke head protein 3 homolog (RSPH3) from Bos taurus (Bovine).